A 263-amino-acid chain; its full sequence is Hydroxyacylglutathione hydrolase (263 aa).

Zn(2+)-binding residues include His-55, His-57, Asp-59, His-60, His-117, Asp-134, and His-172.

Belongs to the metallo-beta-lactamase superfamily. Glyoxalase II family. In terms of assembly, monomer. The cofactor is Zn(2+).

The catalysed reaction is an S-(2-hydroxyacyl)glutathione + H2O = a 2-hydroxy carboxylate + glutathione + H(+). The protein operates within secondary metabolite metabolism; methylglyoxal degradation; (R)-lactate from methylglyoxal: step 2/2. Its function is as follows. Thiolesterase that catalyzes the hydrolysis of S-D-lactoyl-glutathione to form glutathione and D-lactic acid. This Shewanella baltica (strain OS155 / ATCC BAA-1091) protein is Hydroxyacylglutathione hydrolase.